A 352-amino-acid polypeptide reads, in one-letter code: NAD(+)-dependent homoserine dehydrogenase (352 aa).

Belongs to the homoserine dehydrogenase family.

The catalysed reaction is L-homoserine + NAD(+) = L-aspartate 4-semialdehyde + NADH + H(+). Dehydrogenase involved in the degradation of canavanine, the delta-oxa-analog of arginine, allowing growth on canavanine as sole nitrogen and carbon source. Catalyzes the conversion of homoserine and NAD(+) to aspartate-semialdehyde and NADH. Is highly specific for NAD(+) and cannot use NADP(+). In Pseudomonas canavaninivorans, this protein is NAD(+)-dependent homoserine dehydrogenase.